Here is a 248-residue protein sequence, read N- to C-terminus: Triosephosphate isomerase (248 aa).

Residue 9–11 participates in substrate binding; it reads NWK. Residue His94 is the Electrophile of the active site. Residue Glu166 is the Proton acceptor of the active site. Substrate contacts are provided by residues Gly172, Ser212, and 233 to 234; that span reads GG.

Belongs to the triosephosphate isomerase family. Homodimer.

The protein localises to the cytoplasm. It catalyses the reaction D-glyceraldehyde 3-phosphate = dihydroxyacetone phosphate. The protein operates within carbohydrate biosynthesis; gluconeogenesis. It participates in carbohydrate degradation; glycolysis; D-glyceraldehyde 3-phosphate from glycerone phosphate: step 1/1. Its function is as follows. Involved in the gluconeogenesis. Catalyzes stereospecifically the conversion of dihydroxyacetone phosphate (DHAP) to D-glyceraldehyde-3-phosphate (G3P). This chain is Triosephosphate isomerase, found in Clostridium botulinum (strain Loch Maree / Type A3).